We begin with the raw amino-acid sequence, 500 residues long: Endothelial lipase (500 aa).

Residues 1-20 (MRNTVFLLGFWSVYCYFPAG) form the signal peptide. Cys-64 and Cys-77 are oxidised to a cystine. N-linked (GlcNAc...) asparagine glycans are attached at residues Asn-65, Asn-80, and Asn-136. The active-site Nucleophile is the Ser-169. The active-site Charge relay system is the Asp-193. Cys-252 and Cys-272 are joined by a disulfide. The active-site Charge relay system is His-274. 2 cysteine pairs are disulfide-bonded: Cys-297–Cys-316 and Cys-308–Cys-311. 325–337 (KMRKKRNSKMYLK) lines the heparin pocket. The PLAT domain occupies 347–482 (YHYQLKVHMF…SPGQELWFHK (136 aa)). Asn-359 and Asn-393 each carry an N-linked (GlcNAc...) asparagine glycan. The cysteines at positions 463 and 483 are disulfide-linked. Residue Asn-491 is glycosylated (N-linked (GlcNAc...) asparagine).

This sequence belongs to the AB hydrolase superfamily. Lipase family. In terms of assembly, head to tail homodimer. As to expression, expressed in placenta, lung, liver, testis and spleen.

The protein localises to the secreted. It carries out the reaction a triacylglycerol + H2O = a diacylglycerol + a fatty acid + H(+). The catalysed reaction is a 1,2-diacyl-sn-glycero-3-phosphocholine + H2O = a 2-acyl-sn-glycero-3-phosphocholine + a fatty acid + H(+). It catalyses the reaction 1,2,3-tri-(9Z-octadecenoyl)-glycerol + H2O = di-(9Z)-octadecenoylglycerol + (9Z)-octadecenoate + H(+). The enzyme catalyses 1,2,3-tributanoylglycerol + H2O = dibutanoylglycerol + butanoate + H(+). It carries out the reaction 1,2-dihexadecanoyl-sn-glycero-3-phosphocholine + H2O = hexadecanoyl-sn-glycero-3-phosphocholine + hexadecanoate + H(+). In terms of biological role, exerts both phospholipase and triglyceride lipase activities. More active as a phospholipase than a triglyceride lipase. Hydrolyzes triglycerides, both with short-chain fatty acyl groups (tributyrin) and long-chain fatty acyl groups (triolein) with similar levels of activity toward both types of substrates. Hydrolyzes high density lipoproteins (HDL) more efficiently than other lipoproteins. The polypeptide is Endothelial lipase (Lipg) (Mus musculus (Mouse)).